A 157-amino-acid polypeptide reads, in one-letter code: Holo-[acyl-carrier-protein] synthase (157 aa).

Residues D8 and E59 each coordinate Mg(2+).

It belongs to the P-Pant transferase superfamily. AcpS family. The cofactor is Mg(2+).

The protein localises to the cytoplasm. It carries out the reaction apo-[ACP] + CoA = holo-[ACP] + adenosine 3',5'-bisphosphate + H(+). Functionally, transfers the 4'-phosphopantetheine moiety from coenzyme A to a Ser of acyl-carrier-protein. This is Holo-[acyl-carrier-protein] synthase from Gluconobacter oxydans (strain 621H) (Gluconobacter suboxydans).